The following is a 267-amino-acid chain: Serine/arginine-rich splicing factor 1 (267 aa).

In terms of domain architecture, RRM 1 spans 16-91 (CRIYVGNLPP…YRLRVEFPRS (76 aa)). 2 disordered regions span residues 90–137 (RSGR…PSRR) and 212–267 (KVDG…RSRT). A compositionally biased stretch (gly residues) spans 93–127 (RGAGGRGGGGGGGGGGGGGGGGGGGGGGGGGGGAP). The RRM 2 domain occupies 140-214 (YRVVVSGLPP…ETAYIRVKVD (75 aa)). Basic residues predominate over residues 224 to 267 (SRSRSRSRSRSRSRSNSRSRSYSPRRSRGSPRYSPRHSRSRSRT).

It belongs to the splicing factor SR family.

It is found in the cytoplasm. The protein localises to the nucleus speckle. In terms of biological role, may play a role in preventing exon skipping, ensuring the accuracy of splicing and regulating alternative splicing. The protein is Serine/arginine-rich splicing factor 1 (srsf1) of Xenopus tropicalis (Western clawed frog).